Consider the following 241-residue polypeptide: MIVFPAIDLKAGQVVRLAEGDMDRATVYGDNPAHQASLFAQAGSQYLHVVDLDGSFAGRAENREAVEGILKSFPGHVQLGGGIRTREAVSGWFDLGVSRVVMGTAALKDPQFVKDMAKEFPGGIVVAVDARDGMVATEGWADVSDVSVVDLARRFEDAGVASLLFTDIGRDGLLKGVNLDATVELARRVDIPVIASGGVKGIDDIRMLKIHEGDGIEGVITGRALYDGRLDLKAAIEMAEA.

Catalysis depends on aspartate 8, which acts as the Proton acceptor. Catalysis depends on aspartate 129, which acts as the Proton donor.

The protein belongs to the HisA/HisF family.

The protein localises to the cytoplasm. The enzyme catalyses 1-(5-phospho-beta-D-ribosyl)-5-[(5-phospho-beta-D-ribosylamino)methylideneamino]imidazole-4-carboxamide = 5-[(5-phospho-1-deoxy-D-ribulos-1-ylimino)methylamino]-1-(5-phospho-beta-D-ribosyl)imidazole-4-carboxamide. It participates in amino-acid biosynthesis; L-histidine biosynthesis; L-histidine from 5-phospho-alpha-D-ribose 1-diphosphate: step 4/9. The protein is 1-(5-phosphoribosyl)-5-[(5-phosphoribosylamino)methylideneamino] imidazole-4-carboxamide isomerase of Novosphingobium aromaticivorans (strain ATCC 700278 / DSM 12444 / CCUG 56034 / CIP 105152 / NBRC 16084 / F199).